Here is a 71-residue protein sequence, read N- to C-terminus: Antitoxin VapB26 (71 aa).

Its function is as follows. Antitoxin component of a type II toxin-antitoxin (TA) system. Upon expression in M.smegmatis neutralizes the effect of cognate toxin VapC26. The sequence is that of Antitoxin VapB26 (vapB26) from Mycobacterium tuberculosis (strain ATCC 25618 / H37Rv).